A 342-amino-acid chain; its full sequence is MTSLTLALDAMGGDHGPHVTVPAALRALKSHSSLKIILVGDKTEIDVYLRQAEQPLLSRIEVIHTDEVVSMSDRPVHALRTRKNSSMRLSIELVRDGRAAACVSAGNTGALMAMAKVLLKTLPGVDRPALVSCLPSVTQKPVYLLDLGANISCDSETLFQFAVMGSVLCEAVDKKSRPKVALLNVGTEEIKGNDQVQQAAQILQNTDQINYTGFIEGDEIYSGNVDVIVCDGFVGNITLKTSEGIAKLLVHQLKRGLTQGFFVRFLAKLIAPRIQAVLSQMNPDHYNGASLIGLRGIVVKSHGNADETAYLQAINLAVTEAQRRLPEMIKDRLESILLDINN.

Belongs to the PlsX family. In terms of assembly, homodimer. Probably interacts with PlsY.

The protein resides in the cytoplasm. The catalysed reaction is a fatty acyl-[ACP] + phosphate = an acyl phosphate + holo-[ACP]. It functions in the pathway lipid metabolism; phospholipid metabolism. Its function is as follows. Catalyzes the reversible formation of acyl-phosphate (acyl-PO(4)) from acyl-[acyl-carrier-protein] (acyl-ACP). This enzyme utilizes acyl-ACP as fatty acyl donor, but not acyl-CoA. This Shewanella sp. (strain MR-4) protein is Phosphate acyltransferase.